A 117-amino-acid polypeptide reads, in one-letter code: uncharacterized protein (117 aa).

The chain crosses the membrane as a helical span at residues 1–21; it reads MEIAIIALFIVSIALIAFSYS. Positions 38-67 form a coiled coil; that stretch reads LSAMQEIYKLKKKMTVLEEELLETNLVIRK.

The protein localises to the cell membrane. This is an uncharacterized protein from Bacillus subtilis (strain 168).